The sequence spans 246 residues: Bis(5'-nucleosyl)-tetraphosphatase PrpE [asymmetrical] (246 aa).

The protein belongs to the PrpE family. It depends on Ni(2+) as a cofactor.

The enzyme catalyses P(1),P(4)-bis(5'-guanosyl) tetraphosphate + H2O = GMP + GTP + 2 H(+). Asymmetrically hydrolyzes Ap4p to yield AMP and ATP. This is Bis(5'-nucleosyl)-tetraphosphatase PrpE [asymmetrical] from Bacillus cereus (strain ATCC 10987 / NRS 248).